The sequence spans 158 residues: 2-C-methyl-D-erythritol 2,4-cyclodiphosphate synthase (158 aa).

2 residues coordinate a divalent metal cation: aspartate 9 and histidine 11. Residues 9–11 and 35–36 each bind 4-CDP-2-C-methyl-D-erythritol 2-phosphate; these read DVH and HS. Histidine 43 contacts a divalent metal cation. Residues 57 to 59 and arginine 143 contribute to the 4-CDP-2-C-methyl-D-erythritol 2-phosphate site; that span reads DIG.

Belongs to the IspF family. In terms of assembly, homotrimer. Requires a divalent metal cation as cofactor.

The catalysed reaction is 4-CDP-2-C-methyl-D-erythritol 2-phosphate = 2-C-methyl-D-erythritol 2,4-cyclic diphosphate + CMP. Its pathway is isoprenoid biosynthesis; isopentenyl diphosphate biosynthesis via DXP pathway; isopentenyl diphosphate from 1-deoxy-D-xylulose 5-phosphate: step 4/6. Functionally, involved in the biosynthesis of isopentenyl diphosphate (IPP) and dimethylallyl diphosphate (DMAPP), two major building blocks of isoprenoid compounds. Catalyzes the conversion of 4-diphosphocytidyl-2-C-methyl-D-erythritol 2-phosphate (CDP-ME2P) to 2-C-methyl-D-erythritol 2,4-cyclodiphosphate (ME-CPP) with a corresponding release of cytidine 5-monophosphate (CMP). The polypeptide is 2-C-methyl-D-erythritol 2,4-cyclodiphosphate synthase (Chromobacterium violaceum (strain ATCC 12472 / DSM 30191 / JCM 1249 / CCUG 213 / NBRC 12614 / NCIMB 9131 / NCTC 9757 / MK)).